A 194-amino-acid polypeptide reads, in one-letter code: ATP-dependent Clp protease proteolytic subunit 3 (194 aa).

Serine 96 serves as the catalytic Nucleophile. Residue histidine 121 is part of the active site.

Belongs to the peptidase S14 family. As to quaternary structure, fourteen ClpP subunits assemble into 2 heptameric rings which stack back to back to give a disk-like structure with a central cavity, resembling the structure of eukaryotic proteasomes.

It is found in the cytoplasm. The enzyme catalyses Hydrolysis of proteins to small peptides in the presence of ATP and magnesium. alpha-casein is the usual test substrate. In the absence of ATP, only oligopeptides shorter than five residues are hydrolyzed (such as succinyl-Leu-Tyr-|-NHMec, and Leu-Tyr-Leu-|-Tyr-Trp, in which cleavage of the -Tyr-|-Leu- and -Tyr-|-Trp bonds also occurs).. Cleaves peptides in various proteins in a process that requires ATP hydrolysis. Has a chymotrypsin-like activity. Plays a major role in the degradation of misfolded proteins. The sequence is that of ATP-dependent Clp protease proteolytic subunit 3 from Rhizobium johnstonii (strain DSM 114642 / LMG 32736 / 3841) (Rhizobium leguminosarum bv. viciae).